The primary structure comprises 465 residues: UDP-glycosyltransferase TURAN (465 aa).

At 1–75 the chain is on the cytoplasmic side; that stretch reads MGKRGRACVV…FIQYFPKILY (75 aa). The helical transmembrane segment at 76–96 threads the bilayer; it reads PVTLLLKAFIQFTMLLWFLFV. At 97-465 the chain is on the lumenal side; that stretch reads KVPAPDIFLV…TQVVSQIADS (369 aa). Residue N238 is glycosylated (N-linked (GlcNAc...) asparagine).

Belongs to the glycosyltransferase group 1 family. Glycosyltransferase 33 subfamily.

The protein resides in the endoplasmic reticulum membrane. Its pathway is protein modification; protein glycosylation. Required for pollen tube (PT) growth and integrity by affecting the stability of the pollen-specific ANX1 and ANX2 proteins. Involved in protein N-glycosylation in the endoplasmic reticulum (ER), especially in the female gametophyte. Mediates PT reception in synergids through protein glycosylation. This is UDP-glycosyltransferase TURAN from Arabidopsis thaliana (Mouse-ear cress).